We begin with the raw amino-acid sequence, 140 residues long: MSAISSLVPSRFLTLTAHLVIVITIFWSRENNVLACLPINFTPQQFSSRDTELIIALSVTLGLFAVEYAGFLSGVSMFNKTQSLLSVGAHASATVSLLFFLFEGWDCSLYWWIMSFCSALPAVTEIIIFIAVFGWKRKPL.

A run of 2 helical transmembrane segments spans residues 7–27 and 53–73; these read LVPS…TIFW and LIIA…GFLS. Asn79 carries an N-linked (GlcNAc...) asparagine glycan. The next 2 membrane-spanning stretches (helical) occupy residues 84 to 104 and 113 to 133; these read LLSV…LFEG and IMSF…IAVF.

It localises to the membrane. Functionally, may play a role in cilia formation and embryonic patterning. In Xenopus laevis (African clawed frog), this protein is Transmembrane protein 107 (tmem107).